The primary structure comprises 108 residues: Replication initiation control protein YabA (108 aa).

Zn(2+)-binding residues include His83, Cys85, Cys99, and Cys102.

This sequence belongs to the YabA family. As to quaternary structure, homotetramer. Interacts with both DnaA and DnaN, acting as a bridge between these two proteins. Zn(2+) serves as cofactor.

The protein resides in the cytoplasm. Its subcellular location is the nucleoid. In terms of biological role, involved in control of chromosome replication initiation. Inhibits the cooperative binding of DnaA to the oriC region, thus negatively regulating initiation of chromosome replication. Inhibits the ability of DnaA-ATP to form a helix on DNA; does not disassemble preformed DnaA-DNA helices. Decreases the residence time of DnaA on the chromosome at its binding sites (oriC, replication forks and promoter-binding sites). Tethers DnaA to the replication machinery via the DNA polymerase beta sliding clamp subunit (dnaN). Associates with oriC and other DnaA targets on the chromosome in a DnaA-dependent manner. In Lactococcus lactis subsp. cremoris (strain SK11), this protein is Replication initiation control protein YabA.